The sequence spans 189 residues: Batroxicidin (189 aa).

The signal sequence occupies residues 1 to 22; sequence MQGFFWKTWLVVALCGTSSSLA. Residues 23–155 constitute a propeptide that is removed on maturation; that stretch reads HRPLSYGEAL…DEEKDRPKRV (133 aa). Disulfide bonds link Cys79–Cys90 and Cys101–Cys118. Over residues 125–148 the composition is skewed to acidic residues; it reads EEEEEDEEEQKAEVEKDEEKEDEE. A disordered region spans residues 125 to 152; sequence EEEEEDEEEQKAEVEKDEEKEDEEKDRP.

This sequence belongs to the cathelicidin family. In terms of tissue distribution, expressed by the venom gland.

The protein localises to the secreted. The protein resides in the target cell membrane. Functionally, potent antimicrobial peptide against Gram-negative (MIC=0.25 ug/ml against E.coli ATCC 25922, MIC=1 ug/ml against P.aeruginosa) and Gram-positive bacteria (MIC=32 ug/ml against E.faecalis, MIC=32 ug/ml against S.aureus). Adopts an amphipathic alpha helical conformation, that may allow to partition into the target membrane. Low hemolytic activities have been observed on mammalian cells. In addition, when tested in vitro on the parasite Trypanosoma cruzi (responsible of the Chagas disease), is able to reduce the number of the three forms (epimastigote, trypomastigote and amastigote) by inducing cell death through necrosis. The sequence is that of Batroxicidin from Bothrops atrox (Barba amarilla).